The chain runs to 1305 residues: MDSVPRLTGVFTLLLSGLWHLGSSATNYNCDDPLASLLSPMAFSSSSDLTGTHSPAQLNRRVGTGGWSPADSNAQQWLQMDLGNRVEITAVATQGRYGSSDWVTSYSLMFSDTGRNWKQYKQEDSIWTFAGNMNADSVMHHKLLHSVRARFVRFVPLEWNPSGKIGMRVEVYGCSYKSDVADFDGRSSLLYRFNQKLMSTLKDVISLKFKSMQGDGVLFHGEGQRGDHITLELQKGRLALHLNLDDSKPRLSSSPPSVTLGSLLDDQQWHSVLIERVGKQVNFSVDKHTQHFRTKGEADALDIDYELSFGGIPVPGKPGTFLKKNFHGCIENLYYNGVNIIDLAKRRKHQIYTGNVTFSCSEPQIVPITFVNSSSSYLLLPGTPQIDGLSVSFQFRTWNKDGLLLSTELSEGSGTLLLSLEGGTVRLVIQKMTERTAEILTGSSLNDGLWHSVSINARRDRITLSLDNDAASPAQDTTRVQIYSGNSYYFGGCPDNLTDSQCLNPIKAFQGCMRLIFIDNQPKDLISVQQGSLGNFSDLHIDLCSIKDRCLPNYCEHGGFCSQSWTTFYCNCSNTGYTGATCHNSLYEQSCEVYRHQGNTAGFFYIDSDGSGPLGPLQVYCNITEDKIWTSVQHNNTELTHVRGANPEKPYTMALDYGGSMEQLEAMIDSSEHCEQEVAYHCRRSRLLNTPDGTPFTWWIGRSNEKHPYWGGAPPGVQQCECGLDESCLDVRHFCNCDADKDEWTNDTGFLSFKDHLPVTQIVITDTNRSNSEAAWRIGPLRCYGDRHFWNAVSFYTEASYLHFPTFHAEFSADISFFFKTTALSGVFLENLGIKDFIRLEISSPSEITFAIDVGNGPVELIVHSPSLLNDNQWHYIRAERNLKETSLQVDSLPRMTRETSEEGHFRLQLNSQLFVGGTSSRQKGFLGCIRSLHLNGQKLDLEERAKVTSGVRPGCPGHCSTYGSICHNGGKCVEKYSGYFCDCTNSPYEGPFCKKEVSAVFEAGTSVTYMFQEPYPVTKNISLSSSAIYADAAPSKENIAFSFVTAQAPSLLLYINSSQDYLAVLLCKNGSLQVRYQLSKEETQVFNIDAENFANRRMHHLKINREGRELAIQVDHQLRLSYNFSSEVEFRAIRSLTLGKVREHLGLDSEIAKANTLGFVGCLSSVQYNQVAPLKAALRHATIAPVTVQGTLMESSCGSMVDVDVNTVTTVHSSSDPFGKTDEREPLTNAVRSDSAVIGGVIAVVIFIIFSIIGIMTRFLYQHKQSHRTNQMKEKEYPENLDSSFRNDIDLQNTVSECKREYFI.

The N-terminal stretch at 1–24 (MDSVPRLTGVFTLLLSGLWHLGSS) is a signal peptide. Residues 25-1236 (ATNYNCDDPL…PLTNAVRSDS (1212 aa)) are Extracellular-facing. One can recognise an F5/8 type C domain in the interval 30-174 (CDDPLASLLS…IGMRVEVYGC (145 aa)). A disulfide bond links cysteine 30 and cysteine 174. Laminin G-like domains are found at residues 180 to 360 (VADF…TFSC) and 367 to 544 (PITF…IDLC). N-linked (GlcNAc...) asparagine glycosylation is found at asparagine 282, asparagine 355, and asparagine 496. A disulfide bond links cysteine 329 and cysteine 360. 4 disulfide bridges follow: cysteine 512–cysteine 544, cysteine 550–cysteine 561, cysteine 555–cysteine 570, and cysteine 572–cysteine 582. The region spanning 546–583 (IKDRCLPNYCEHGGFCSQSWTTFYCNCSNTGYTGATCH) is the EGF-like 1 domain. A Fibrinogen C-terminal domain is found at 584–790 (NSLYEQSCEV…LRCYGDRHFW (207 aa)). The N-linked (GlcNAc...) asparagine glycan is linked to asparagine 622. The Laminin G-like 3 domain maps to 791 to 956 (NAVSFYTEAS…KVTSGVRPGC (166 aa)). Cystine bridges form between cysteine 929/cysteine 956, cysteine 960/cysteine 973, cysteine 967/cysteine 982, cysteine 984/cysteine 994, and cysteine 1163/cysteine 1198. An EGF-like 2 domain is found at 957 to 995 (PGHCSTYGSICHNGGKCVEKYSGYFCDCTNSPYEGPFCK). The Laminin G-like 4 domain maps to 1000-1198 (AVFEAGTSVT…VQGTLMESSC (199 aa)). Residues 1237 to 1257 (AVIGGVIAVVIFIIFSIIGIM) traverse the membrane as a helical segment. The Cytoplasmic portion of the chain corresponds to 1258–1305 (TRFLYQHKQSHRTNQMKEKEYPENLDSSFRNDIDLQNTVSECKREYFI).

The protein belongs to the neurexin family.

It localises to the membrane. In terms of biological role, may play a role in the correct development and proper functioning of the peripheral and central nervous system and be involved in cell adhesion and intercellular communication. This chain is Contactin-associated protein-like 5 (CNTNAP5), found in Canis lupus familiaris (Dog).